A 199-amino-acid chain; its full sequence is Cytochrome c oxidase subunit 2 (199 aa).

A helical transmembrane segment spans residues alanine 1 to methionine 13. The Mitochondrial matrix portion of the chain corresponds to leucine 14 to glutamine 26. The helical transmembrane segment at glutamate 27–methionine 54 threads the bilayer. Residues aspartate 55–leucine 199 are Mitochondrial intermembrane-facing. Residues histidine 128, cysteine 163, glutamate 165, cysteine 167, histidine 171, and methionine 174 each contribute to the Cu cation site. Glutamate 165 serves as a coordination point for Mg(2+).

It belongs to the cytochrome c oxidase subunit 2 family. Component of the cytochrome c oxidase (complex IV, CIV), a multisubunit enzyme composed of 14 subunits. The complex is composed of a catalytic core of 3 subunits MT-CO1, MT-CO2 and MT-CO3, encoded in the mitochondrial DNA, and 11 supernumerary subunits COX4I, COX5A, COX5B, COX6A, COX6B, COX6C, COX7A, COX7B, COX7C, COX8 and NDUFA4, which are encoded in the nuclear genome. The complex exists as a monomer or a dimer and forms supercomplexes (SCs) in the inner mitochondrial membrane with NADH-ubiquinone oxidoreductase (complex I, CI) and ubiquinol-cytochrome c oxidoreductase (cytochrome b-c1 complex, complex III, CIII), resulting in different assemblies (supercomplex SCI(1)III(2)IV(1) and megacomplex MCI(2)III(2)IV(2)). Found in a complex with TMEM177, COA6, COX18, COX20, SCO1 and SCO2. Interacts with TMEM177 in a COX20-dependent manner. Interacts with COX20. Interacts with COX16. It depends on Cu cation as a cofactor.

It localises to the mitochondrion inner membrane. The catalysed reaction is 4 Fe(II)-[cytochrome c] + O2 + 8 H(+)(in) = 4 Fe(III)-[cytochrome c] + 2 H2O + 4 H(+)(out). Its function is as follows. Component of the cytochrome c oxidase, the last enzyme in the mitochondrial electron transport chain which drives oxidative phosphorylation. The respiratory chain contains 3 multisubunit complexes succinate dehydrogenase (complex II, CII), ubiquinol-cytochrome c oxidoreductase (cytochrome b-c1 complex, complex III, CIII) and cytochrome c oxidase (complex IV, CIV), that cooperate to transfer electrons derived from NADH and succinate to molecular oxygen, creating an electrochemical gradient over the inner membrane that drives transmembrane transport and the ATP synthase. Cytochrome c oxidase is the component of the respiratory chain that catalyzes the reduction of oxygen to water. Electrons originating from reduced cytochrome c in the intermembrane space (IMS) are transferred via the dinuclear copper A center (CU(A)) of subunit 2 and heme A of subunit 1 to the active site in subunit 1, a binuclear center (BNC) formed by heme A3 and copper B (CU(B)). The BNC reduces molecular oxygen to 2 water molecules using 4 electrons from cytochrome c in the IMS and 4 protons from the mitochondrial matrix. This Dromaius novaehollandiae (Emu) protein is Cytochrome c oxidase subunit 2 (MT-CO2).